A 297-amino-acid chain; its full sequence is UDP-3-O-acyl-N-acetylglucosamine deacetylase (297 aa).

Zn(2+)-binding residues include histidine 77, histidine 236, and aspartate 240. Catalysis depends on histidine 263, which acts as the Proton donor.

The protein belongs to the LpxC family. Requires Zn(2+) as cofactor.

It catalyses the reaction a UDP-3-O-[(3R)-3-hydroxyacyl]-N-acetyl-alpha-D-glucosamine + H2O = a UDP-3-O-[(3R)-3-hydroxyacyl]-alpha-D-glucosamine + acetate. Its pathway is glycolipid biosynthesis; lipid IV(A) biosynthesis; lipid IV(A) from (3R)-3-hydroxytetradecanoyl-[acyl-carrier-protein] and UDP-N-acetyl-alpha-D-glucosamine: step 2/6. Its function is as follows. Catalyzes the hydrolysis of UDP-3-O-myristoyl-N-acetylglucosamine to form UDP-3-O-myristoylglucosamine and acetate, the committed step in lipid A biosynthesis. The protein is UDP-3-O-acyl-N-acetylglucosamine deacetylase of Psychrobacter sp. (strain PRwf-1).